We begin with the raw amino-acid sequence, 545 residues long: MSLFSIIKDCGGIHNIQRVLIPDSRIIIEIHEFELLSAEAKQQAYNLTLKQVTYQQTVIENKDEFGAQLLEIGQLISDQQRQDITPYTAPVECEFRPDWHISPPQGLLNDPNGFIYHQGQYHLFYQWYPYTCVHKDKYWAHLTSKDLVNWQWQPVALTPSDWFDSYGVFSGHAISQDDLLMLFYTGNVRIGEQRDRHTTQCLATSTDGIHFTKQGPVVPELPPGVTPHCRDPKVIRHNDRWLMLLGVQREDEIGRLAIYHSEDLKTWTFIALCGDELGDFGYMWECPDFFTLNQQDFIVIGPQGIRSPDKSHTAPHHNGIVKAQLETSGKALLSDFQPLDYGFDFYAPQSLETPDGRRIMCAWMGLPDEIDHPSADNGWVHQLTTMRELSYDNGALIQKPIKELATLRHTPIVLSKDETSFDLHSKAFELQVSMQWGSVLRLHQSESGYCEIRLDSASRRLYIDRSNTLIREGDTVREMSLAESDSVQLHIFSDTSSLEVFINEGEAVMSARVFTDKNSTQLSFDGDVQIQACWLLNKASAPFIS.

Substrate contacts are provided by residues 107-110, glutamine 126, 169-170, 230-231, and glutamate 285; these read LLND, FS, and RD. The active site involves aspartate 110.

It belongs to the glycosyl hydrolase 32 family.

The protein resides in the cytoplasm. It carries out the reaction Hydrolysis of terminal non-reducing beta-D-fructofuranoside residues in beta-D-fructofuranosides.. It functions in the pathway glycan biosynthesis; sucrose metabolism. Functionally, enables the bacterium to metabolize sucrose as a sole carbon source. The polypeptide is Probable sucrose-6-phosphate hydrolase (Psychromonas ingrahamii (strain DSM 17664 / CCUG 51855 / 37)).